A 387-amino-acid polypeptide reads, in one-letter code: Patatin-01 (387 aa).

A signal peptide spans 1–23 (MATTKSFLILSVMILATTSSTFA). Residues 32–230 (LSIDGGGIKG…TVADPALLSV (199 aa)) form the PNPLA domain. The GXGXXG motif lies at 36 to 41 (GGGIKG). A GXSXG motif is present at residues 75 to 79 (GTSTG). Ser-77 (nucleophile) is an active-site residue. An N-linked (GlcNAc...) asparagine glycan is attached at Asn-115. The active-site Proton acceptor is Asp-216. A DGA/G motif is present at residues 216-218 (DGA). The stretch at 361 to 385 (ETYEEALKRFAKLLSDRKKLRANKA) forms a coiled coil.

The protein belongs to the patatin family. In terms of tissue distribution, tuber.

It is found in the vacuole. Functionally, probable lipolytic acyl hydrolase (LAH), an activity which is thought to be involved in the response of tubers to pathogens. The chain is Patatin-01 from Solanum tuberosum (Potato).